The sequence spans 415 residues: Actin-like protein 9 (415 aa).

The segment at 1 to 22 (MDVNGHPKFQPSPETDGPLPLT) is disordered.

It belongs to the actin family. In terms of assembly, interacts with ACTL7A.

It is found in the cytoplasmic vesicle. The protein localises to the secretory vesicle. The protein resides in the acrosome. Its subcellular location is the cytoplasm. It localises to the cytoskeleton. It is found in the perinuclear theca. Testis-specic protein that plays an important role in fusion of proacrosomal vesicles and perinuclear theca formation. This is Actin-like protein 9 (Actl9) from Mus musculus (Mouse).